We begin with the raw amino-acid sequence, 166 residues long: Cofilin-1 (166 aa).

An N-acetylalanine modification is found at A2. Phosphoserine is present on residues S3 and S8. One can recognise an ADF-H domain in the interval 4-153 (GVAVSDGVIK…KDRCTLAEKL (150 aa)). At K13 the chain carries N6-acetyllysine. Phosphothreonine is present on T25. The short motif at 30–34 (KKRKK) is the Nuclear localization signal element. Residue S41 is modified to Phosphoserine. At Y68 the chain carries Phosphotyrosine. K73 is subject to N6-acetyllysine. Residue K132 forms a Glycyl lysine isopeptide (Lys-Gly) (interchain with G-Cter in SUMO2) linkage. The residue at position 140 (Y140) is a Phosphotyrosine. K144 is modified (N6-acetyllysine). S156 carries the post-translational modification Phosphoserine.

It belongs to the actin-binding proteins ADF family. As to quaternary structure, can bind G- and F-actin in a 1:1 ratio of cofilin to actin. It is a major component of intranuclear and cytoplasmic actin rods. Interacts with the subcortical maternal complex (SCMC) via interaction with TLE6 and NLRP5. Interacts with C9orf72. Post-translationally, inactivated by phosphorylation on Ser-3. Phosphorylated on Ser-3 in resting cells. Dephosphorylated by PDXP/chronophin; this restores its activity in promoting actin filament depolymerization. The phosphorylation of Ser-24 may prevent recognition of the nuclear localization signal. Phosphorylated via a ARRB1-RAC1-LIMK1-PAK1 cascade upon active ligand stimulation of atypical chemokine receptor ACKR2.

It is found in the nucleus matrix. The protein resides in the cytoplasm. Its subcellular location is the cytoskeleton. The protein localises to the cell projection. It localises to the ruffle membrane. It is found in the lamellipodium membrane. The protein resides in the lamellipodium. Its subcellular location is the growth cone. The protein localises to the axon. In terms of biological role, binds to F-actin and exhibits pH-sensitive F-actin depolymerizing activity. Important for normal progress through mitosis and normal cytokinesis. In conjunction with the subcortical maternal complex (SCMC), plays an essential role for zygotes to progress beyond the first embryonic cell divisions via regulation of actin dynamics. Required for the centralization of the mitotic spindle and symmetric division of zygotes. Plays a role in the regulation of cell morphology and cytoskeletal organization in epithelial cells. Required for the up-regulation of atypical chemokine receptor ACKR2 from endosomal compartment to cell membrane, increasing its efficiency in chemokine uptake and degradation. Required for neural tube morphogenesis and neural crest cell migration. The chain is Cofilin-1 (Cfl1) from Rattus norvegicus (Rat).